We begin with the raw amino-acid sequence, 184 residues long: MKLIAGLGNPGKKYERTRHNVGFMVVDELSFRHQTPWKKSKFNGMVSEINVGGEKMILVKPLTFMNASGECIRPLMDYYNIQVEDVLIVYDDLDLPVGKIRLRQKGSAGGHNGMKSIIQHIKTQEFNRIRVGVSRPLKGEVINYVLGDFPKAEQPDIIAAIQKSADAIEDFAQVPFVEVMNKYN.

Residue Tyr-14 participates in tRNA binding. His-19 (proton acceptor) is an active-site residue. Phe-64, Asn-66, and Asn-112 together coordinate tRNA.

This sequence belongs to the PTH family. Monomer.

Its subcellular location is the cytoplasm. The catalysed reaction is an N-acyl-L-alpha-aminoacyl-tRNA + H2O = an N-acyl-L-amino acid + a tRNA + H(+). Its function is as follows. Hydrolyzes ribosome-free peptidyl-tRNAs (with 1 or more amino acids incorporated), which drop off the ribosome during protein synthesis, or as a result of ribosome stalling. In terms of biological role, catalyzes the release of premature peptidyl moieties from peptidyl-tRNA molecules trapped in stalled 50S ribosomal subunits, and thus maintains levels of free tRNAs and 50S ribosomes. This chain is Peptidyl-tRNA hydrolase, found in Listeria welshimeri serovar 6b (strain ATCC 35897 / DSM 20650 / CCUG 15529 / CIP 8149 / NCTC 11857 / SLCC 5334 / V8).